A 276-amino-acid chain; its full sequence is Lipoyl synthase (276 aa).

[4Fe-4S] cluster-binding residues include Cys27, Cys32, Cys38, Cys53, Cys57, Cys60, and Ser266. The Radical SAM core domain maps to 39–255 (FGNKTATFMI…EEIGYEMGFK (217 aa)).

Belongs to the radical SAM superfamily. Lipoyl synthase family. Requires [4Fe-4S] cluster as cofactor.

The protein resides in the cytoplasm. The catalysed reaction is [[Fe-S] cluster scaffold protein carrying a second [4Fe-4S](2+) cluster] + N(6)-octanoyl-L-lysyl-[protein] + 2 oxidized [2Fe-2S]-[ferredoxin] + 2 S-adenosyl-L-methionine + 4 H(+) = [[Fe-S] cluster scaffold protein] + N(6)-[(R)-dihydrolipoyl]-L-lysyl-[protein] + 4 Fe(3+) + 2 hydrogen sulfide + 2 5'-deoxyadenosine + 2 L-methionine + 2 reduced [2Fe-2S]-[ferredoxin]. Its pathway is protein modification; protein lipoylation via endogenous pathway; protein N(6)-(lipoyl)lysine from octanoyl-[acyl-carrier-protein]: step 2/2. In terms of biological role, catalyzes the radical-mediated insertion of two sulfur atoms into the C-6 and C-8 positions of the octanoyl moiety bound to the lipoyl domains of lipoate-dependent enzymes, thereby converting the octanoylated domains into lipoylated derivatives. The protein is Lipoyl synthase of Aquifex aeolicus (strain VF5).